The following is a 561-amino-acid chain: Asparagine synthetase [glutamine-hydrolyzing] (561 aa).

Residue cysteine 2 is the For GATase activity of the active site. In terms of domain architecture, Glutamine amidotransferase type-2 spans 2-191 (CGIWALFGSD…PGHYEVLDLK (190 aa)). Residues 49-53 (RLAVV), 75-77 (NGE), and aspartate 97 each bind L-glutamine. Positions 213–536 (HAIYDSVEKL…PGRADWLTHY (324 aa)) constitute an Asparagine synthetase domain. ATP-binding positions include leucine 256, isoleucine 288, and 363–364 (SG). The residue at position 385 (lysine 385) is an N6-acetyllysine. Threonine 545 carries the phosphothreonine modification. Serine 557 bears the Phosphoserine mark.

The catalysed reaction is L-aspartate + L-glutamine + ATP + H2O = L-asparagine + L-glutamate + AMP + diphosphate + H(+). The protein operates within amino-acid biosynthesis; L-asparagine biosynthesis; L-asparagine from L-aspartate (L-Gln route): step 1/1. This is Asparagine synthetase [glutamine-hydrolyzing] (Asns) from Mus musculus (Mouse).